The following is a 361-amino-acid chain: Chorismate synthase (361 aa).

Residues arginine 48 and arginine 54 each coordinate NADP(+). FMN contacts are provided by residues 125-127 (RSS), 240-241 (NA), glycine 286, 301-305 (KPTSS), and arginine 327.

The protein belongs to the chorismate synthase family. In terms of assembly, homotetramer. It depends on FMNH2 as a cofactor.

It carries out the reaction 5-O-(1-carboxyvinyl)-3-phosphoshikimate = chorismate + phosphate. The protein operates within metabolic intermediate biosynthesis; chorismate biosynthesis; chorismate from D-erythrose 4-phosphate and phosphoenolpyruvate: step 7/7. Its function is as follows. Catalyzes the anti-1,4-elimination of the C-3 phosphate and the C-6 proR hydrogen from 5-enolpyruvylshikimate-3-phosphate (EPSP) to yield chorismate, which is the branch point compound that serves as the starting substrate for the three terminal pathways of aromatic amino acid biosynthesis. This reaction introduces a second double bond into the aromatic ring system. This Magnetococcus marinus (strain ATCC BAA-1437 / JCM 17883 / MC-1) protein is Chorismate synthase.